A 614-amino-acid polypeptide reads, in one-letter code: Serine/threonine-protein kinase-like protein E (614 aa).

The Protein kinase domain maps to 15-404; it reads YLIQLHLGQN…NPNTNGAPLS (390 aa). 21-29 contributes to the ATP binding site; that stretch reads LGQNSLGQQ. Residues 256–269 are compositionally biased toward polar residues; sequence PEQTDNGVGKSSTG. The tract at residues 256–284 is disordered; sequence PEQTDNGVGKSSTGEPPFPTVHQSPESSS.

This sequence belongs to the protein kinase superfamily. Ser/Thr protein kinase family.

Lacks protein kinase activity. This is Serine/threonine-protein kinase-like protein E (spkE) from Synechocystis sp. (strain ATCC 27184 / PCC 6803 / Kazusa).